A 362-amino-acid polypeptide reads, in one-letter code: Oxygen-dependent coproporphyrinogen-III oxidase (362 aa).

Substrate is bound at residue S118. The a divalent metal cation site is built by H122 and H132. H132 acts as the Proton donor in catalysis. Residue 134 to 136 (NYR) coordinates substrate. Residues H166 and H196 each coordinate a divalent metal cation. The segment at 286 to 321 (YVEFNLVWDRGTIFGLQTNGRTESILMSLPPLVRWE) is important for dimerization.

This sequence belongs to the aerobic coproporphyrinogen-III oxidase family. Homodimer. Requires a divalent metal cation as cofactor.

It localises to the cytoplasm. The enzyme catalyses coproporphyrinogen III + O2 + 2 H(+) = protoporphyrinogen IX + 2 CO2 + 2 H2O. It functions in the pathway porphyrin-containing compound metabolism; protoporphyrin-IX biosynthesis; protoporphyrinogen-IX from coproporphyrinogen-III (O2 route): step 1/1. Functionally, involved in the heme and chlorophyll biosynthesis. Catalyzes the aerobic oxidative decarboxylation of propionate groups of rings A and B of coproporphyrinogen-III to yield the vinyl groups in protoporphyrinogen-IX. This is Oxygen-dependent coproporphyrinogen-III oxidase from Synechococcus sp. (strain CC9605).